The following is a 299-amino-acid chain: N-carbamoylputrescine amidase (299 aa).

The CN hydrolase domain occupies 10–268 (VVVSSLQFAC…EAVLVAQFDL (259 aa)). Glu49 acts as the Proton acceptor in catalysis. The Proton donor role is filled by Lys122. The Nucleophile role is filled by Cys159.

It belongs to the carbon-nitrogen hydrolase superfamily. As to quaternary structure, homooctamer (isoform 2). In terms of tissue distribution, expressed in roots, stems, leaves and flowers.

It catalyses the reaction N-carbamoylputrescine + H2O + 2 H(+) = putrescine + NH4(+) + CO2. The protein operates within amine and polyamine biosynthesis; putrescine biosynthesis via agmatine pathway; putrescine from N-carbamoylputrescine (amidase route): step 1/1. In terms of biological role, involved in polyamine biosynthesis. Catalyzes the hydrolysis of N-carbamoylputrescine to produce putrescine and ammonia. The polypeptide is N-carbamoylputrescine amidase (Arabidopsis thaliana (Mouse-ear cress)).